Reading from the N-terminus, the 255-residue chain is MEKCEGIVIRQTSYRESDKIVRMYTREFGKIGVVARGAKKTKSRLAAVTQLFTNGYFTFFGSNGLGTLQQGEVIENFSSIQQDIFMTAYATYVCELLDKATEERQPNPYLYELTFQILRDINEGYDPQILTQIFEMKMLPVLGLYPTMDKCAICGETTGHFDFSTSSNGIICHRCFEKDRYRMHLPENVVKLLRLFFIFQLDRLGNIDVKPETKEWLQKAIDTYYDEYSGLYLKSRKFLREMDKWENMLKKDSDD.

It belongs to the RecO family.

Functionally, involved in DNA repair and RecF pathway recombination. The polypeptide is DNA repair protein RecO (Listeria monocytogenes serotype 4b (strain CLIP80459)).